Reading from the N-terminus, the 327-residue chain is uncharacterized protein (327 aa).

This is an uncharacterized protein from Lepidoptera (butterflies and moths).